The sequence spans 67 residues: Probable tautomerase K2 (67 aa).

The Proton acceptor; via imino nitrogen role is filled by P2.

This sequence belongs to the 4-oxalocrotonate tautomerase family.

This Dickeya dadantii (strain 3937) (Erwinia chrysanthemi (strain 3937)) protein is Probable tautomerase K2.